The primary structure comprises 361 residues: Chorismate synthase (361 aa).

The disordered stretch occupies residues 37 to 59; it reads TEEDLQHDLDRRRPGTSRYTTPR. Residues 40-49 show a composition bias toward basic and acidic residues; it reads DLQHDLDRRR. Positions 48 and 54 each coordinate NADP(+). Residues 125 to 127, 238 to 239, G278, 293 to 297, and R319 each bind FMN; these read RSS, NA, and KPTSS.

Belongs to the chorismate synthase family. As to quaternary structure, homotetramer. It depends on FMNH2 as a cofactor.

It carries out the reaction 5-O-(1-carboxyvinyl)-3-phosphoshikimate = chorismate + phosphate. The protein operates within metabolic intermediate biosynthesis; chorismate biosynthesis; chorismate from D-erythrose 4-phosphate and phosphoenolpyruvate: step 7/7. Catalyzes the anti-1,4-elimination of the C-3 phosphate and the C-6 proR hydrogen from 5-enolpyruvylshikimate-3-phosphate (EPSP) to yield chorismate, which is the branch point compound that serves as the starting substrate for the three terminal pathways of aromatic amino acid biosynthesis. This reaction introduces a second double bond into the aromatic ring system. The protein is Chorismate synthase of Erwinia tasmaniensis (strain DSM 17950 / CFBP 7177 / CIP 109463 / NCPPB 4357 / Et1/99).